We begin with the raw amino-acid sequence, 256 residues long: Indole-3-glycerol phosphate synthase (256 aa).

The protein belongs to the TrpC family.

It carries out the reaction 1-(2-carboxyphenylamino)-1-deoxy-D-ribulose 5-phosphate + H(+) = (1S,2R)-1-C-(indol-3-yl)glycerol 3-phosphate + CO2 + H2O. It participates in amino-acid biosynthesis; L-tryptophan biosynthesis; L-tryptophan from chorismate: step 4/5. The chain is Indole-3-glycerol phosphate synthase from Pelodictyon phaeoclathratiforme (strain DSM 5477 / BU-1).